Consider the following 111-residue polypeptide: Complement inhibitor CirpT1 (111 aa).

The signal sequence occupies residues 1 to 19 (MATLIAARTKRKAPRVRIF). Cystine bridges form between Cys-40–Cys-64, Cys-59–Cys-98, Cys-76–Cys-99, and Cys-85–Cys-104.

This sequence belongs to the CirpT family. Expressed in salivary glands.

Its subcellular location is the secreted. Functionally, complement inhibitor. Prevents complement-mediated activation of C5 by sterically preventing direct binding of C5 to its convertase (binding with domains MG4 and MG5). Binds C5 at a different binding site than the other tick complement inhibitors OmCI and RaCI3, and the drug eculizumab. Inhibits the complement in human, rat and guinea pig, and also shows a reduced inhibition in rabbit and pig. The chain is Complement inhibitor CirpT1 from Rhipicephalus pulchellus (Yellow backed tick).